Here is a 647-residue protein sequence, read N- to C-terminus: Probable potassium transport system protein Kup (647 aa).

Transmembrane regions (helical) follow at residues 32 to 52 (IALM…SPLY), 74 to 94 (VISM…VLFV), 124 to 144 (LLII…AIIT), 166 to 186 (FVLP…KTGT), 193 to 213 (FGPI…HQVI), 230 to 250 (FLIE…LVLT), 271 to 291 (WFFI…AMFL), 300 to 320 (PFFL…ATAA), 322 to 342 (VIAS…AILL), 361 to 381 (IYMP…VLAF), 390 to 410 (AYGI…AIVM), 418 to 438 (TILV…FLTA), and 443 to 463 (IMEG…FLMT).

Belongs to the HAK/KUP transporter (TC 2.A.72) family.

The protein localises to the cell inner membrane. It carries out the reaction K(+)(in) + H(+)(in) = K(+)(out) + H(+)(out). In terms of biological role, transport of potassium into the cell. Likely operates as a K(+):H(+) symporter. This chain is Probable potassium transport system protein Kup, found in Polynucleobacter asymbioticus (strain DSM 18221 / CIP 109841 / QLW-P1DMWA-1) (Polynucleobacter necessarius subsp. asymbioticus).